Consider the following 117-residue polypeptide: UPF0295 protein GK0479 (117 aa).

The next 2 helical transmembrane spans lie at 12–32 (IRTF…LGLF) and 42–62 (LFML…FWIG).

The protein belongs to the UPF0295 family.

Its subcellular location is the cell membrane. The polypeptide is UPF0295 protein GK0479 (Geobacillus kaustophilus (strain HTA426)).